The following is a 565-amino-acid chain: Glycine/sarcosine/dimethylglycine N-methyltransferase (565 aa).

The span at methionine 1–arginine 10 shows a compositional bias: basic and acidic residues. Residues methionine 1–glutamate 34 are disordered. S-adenosyl-L-methionine contacts are provided by residues tyrosine 45, tryptophan 53, arginine 62, alanine 86, aspartate 107, aspartate 134–tryptophan 135, and leucine 152. Asparagine 154, arginine 187, and tyrosine 226 together coordinate substrate.

Belongs to the class I-like SAM-binding methyltransferase superfamily. Glycine N-methyltransferase family. As to quaternary structure, monomer.

It carries out the reaction glycine + 2 S-adenosyl-L-methionine = N,N-dimethylglycine + 2 S-adenosyl-L-homocysteine + 2 H(+). It catalyses the reaction sarcosine + 2 S-adenosyl-L-methionine = glycine betaine + 2 S-adenosyl-L-homocysteine + 2 H(+). The catalysed reaction is glycine + S-adenosyl-L-methionine = sarcosine + S-adenosyl-L-homocysteine + H(+). The enzyme catalyses sarcosine + S-adenosyl-L-methionine = N,N-dimethylglycine + S-adenosyl-L-homocysteine + H(+). It carries out the reaction N,N-dimethylglycine + S-adenosyl-L-methionine = glycine betaine + S-adenosyl-L-homocysteine + H(+). It participates in amine and polyamine biosynthesis; betaine biosynthesis via glycine pathway; betaine from glycine: step 1/3. The protein operates within amine and polyamine biosynthesis; betaine biosynthesis via glycine pathway; betaine from glycine: step 2/3. Its pathway is amine and polyamine biosynthesis; betaine biosynthesis via glycine pathway; betaine from glycine: step 3/3. Its function is as follows. Catalyzes the methylation of glycine, sarcosine and dimethylglycine to sarcosine, dimethylglycine and betaine, respectively, with S-adenosylmethionine (AdoMet) acting as the methyl donor. Shows low level of activity on glycine when expressed in E.coli. The protein is Glycine/sarcosine/dimethylglycine N-methyltransferase of Actinopolyspora halophila.